The primary structure comprises 312 residues: Putative mitochondrial transporter UCP3 (312 aa).

The Mitochondrial intermembrane portion of the chain corresponds to 1–10 (MVGLKPSDVP). The chain crosses the membrane as a helical span at residues 11 to 32 (PTMAVKFLGAGTAACFADLVTF). 3 Solcar repeats span residues 11–105 (PTMA…VKQV), 114–206 (SSLT…LKEK), and 215–300 (DNFP…LKRA). Residues 33 to 76 (PLDTAKVRLQIQGENQAVQTARLVQYRGVLGTILTMVRTEGPCS) are Mitochondrial matrix-facing. A helical transmembrane segment spans residues 77-99 (PYNGLVAGLQRQMSFASIRIGLY). The Mitochondrial intermembrane portion of the chain corresponds to 100-119 (DSVKQVYTPKGADNSSLTTR). Residues 120–136 (ILAGCTTGAMAVTCAQP) traverse the membrane as a helical segment. Residues 137-183 (TDVVKVRFQASIHLGPSRSDRKYSGTMDAYRTIAREEGVRGLWKGTL) are Mitochondrial matrix-facing. The chain crosses the membrane as a helical span at residues 184–200 (PNIMRNAIVNCAEVVTY). Residues 201 to 217 (DILKEKLLDYHLLTDNF) are Mitochondrial intermembrane-facing. The helical transmembrane segment at 218 to 237 (PCHFVSAFGAGFCATVVASP) threads the bilayer. The Mitochondrial matrix portion of the chain corresponds to 238 to 271 (VDVVKTRYMNSPPGQYFSPLDCMIKMVAQEGPTA). Residues 272–294 (FYKGFTPSFLRLGSWNVVMFVTY) traverse the membrane as a helical segment. Positions 279-301 (SFLRLGSWNVVMFVTYEQLKRAL) are purine nucleotide binding. Residues 295–312 (EQLKRALMKVQMLRESPF) are Mitochondrial intermembrane-facing.

It belongs to the mitochondrial carrier (TC 2.A.29) family. In terms of assembly, interacts with HAX1; the interaction is direct and calcium-dependent. In terms of tissue distribution, only in skeletal muscle and heart. Also expressed in white and brown adipose tissues. Is more expressed in glycolytic than in oxidative skeletal muscles.

Its subcellular location is the mitochondrion inner membrane. Its activity is regulated as follows. The proton transporter activity is activated by fatty acids (in vitro). The proton transporter activity is inhibited by ATP and ADP (in vitro). The effect of Ubiquinone/coenzyme Q10 on the proton transporter activity in reconstituted membranes is unclear (in vitro). Putative transmembrane transporter that plays a role in mitochondrial metabolism via an as yet unclear mechanism. Originally, this mitochondrial protein was thought to act as a proton transmembrane transporter from the mitochondrial intermembrane space into the matrix, causing proton leaks through the inner mitochondrial membrane, thereby uncoupling mitochondrial membrane potential generation from ATP synthesis. However, this function is controversial and uncoupling may not be the function, or at least not the main function, but rather a consequence of more conventional metabolite transporter activity. This is Putative mitochondrial transporter UCP3 from Homo sapiens (Human).